The sequence spans 222 residues: Potassium-transporting ATPase KdpC subunit (222 aa).

The helical transmembrane segment at 13 to 35 threads the bilayer; it reads WAGLRSLLVLTVVTGVLYPLAVT. A disordered region spans residues 136 to 162; sequence TADHKVKPSDVPADAVTSSGSGLDPDI.

This sequence belongs to the KdpC family. As to quaternary structure, the system is composed of three essential subunits: KdpA, KdpB and KdpC.

The protein localises to the cell membrane. In terms of biological role, part of the high-affinity ATP-driven potassium transport (or Kdp) system, which catalyzes the hydrolysis of ATP coupled with the electrogenic transport of potassium into the cytoplasm. This subunit acts as a catalytic chaperone that increases the ATP-binding affinity of the ATP-hydrolyzing subunit KdpB by the formation of a transient KdpB/KdpC/ATP ternary complex. The sequence is that of Potassium-transporting ATPase KdpC subunit from Streptomyces avermitilis (strain ATCC 31267 / DSM 46492 / JCM 5070 / NBRC 14893 / NCIMB 12804 / NRRL 8165 / MA-4680).